An 84-amino-acid polypeptide reads, in one-letter code: MERGNRKTRIGRVVSDKMDKTIVVAVETKVRHPLYGKTVNKTTKFKAHDEKNEAKLNDRVQIMETRPLSKDKRWRLVEIVEKAK.

Belongs to the universal ribosomal protein uS17 family. In terms of assembly, part of the 30S ribosomal subunit.

In terms of biological role, one of the primary rRNA binding proteins, it binds specifically to the 5'-end of 16S ribosomal RNA. In Clostridium acetobutylicum (strain ATCC 824 / DSM 792 / JCM 1419 / IAM 19013 / LMG 5710 / NBRC 13948 / NRRL B-527 / VKM B-1787 / 2291 / W), this protein is Small ribosomal subunit protein uS17.